Consider the following 430-residue polypeptide: UDP-N-acetylmuramoylalanine--D-glutamate ligase (430 aa).

Position 109-115 (109-115 (GTDGKST)) interacts with ATP.

It belongs to the MurCDEF family.

It is found in the cytoplasm. It catalyses the reaction UDP-N-acetyl-alpha-D-muramoyl-L-alanine + D-glutamate + ATP = UDP-N-acetyl-alpha-D-muramoyl-L-alanyl-D-glutamate + ADP + phosphate + H(+). The protein operates within cell wall biogenesis; peptidoglycan biosynthesis. Functionally, cell wall formation. Catalyzes the addition of glutamate to the nucleotide precursor UDP-N-acetylmuramoyl-L-alanine (UMA). This is UDP-N-acetylmuramoylalanine--D-glutamate ligase from Thermotoga sp. (strain RQ2).